The chain runs to 291 residues: Undecaprenyl-diphosphatase 2 (291 aa).

The next 6 membrane-spanning stretches (helical) occupy residues Pro-39–Phe-59, Ala-85–Leu-105, Ile-118–Ala-138, Ala-198–Leu-218, Pro-231–Met-251, and Phe-262–Leu-282.

The protein belongs to the UppP family.

The protein localises to the cell membrane. The enzyme catalyses di-trans,octa-cis-undecaprenyl diphosphate + H2O = di-trans,octa-cis-undecaprenyl phosphate + phosphate + H(+). Catalyzes the dephosphorylation of undecaprenyl diphosphate (UPP). Confers resistance to bacitracin. This Streptomyces coelicolor (strain ATCC BAA-471 / A3(2) / M145) protein is Undecaprenyl-diphosphatase 2.